The following is a 574-amino-acid chain: MAPHKSDDVDAEAELASQLAADVAAAESSAATKAKASSASSSSTPAAERQPFSILDLSEPTRKAIDAMGFKTMTEVQARCIPPLMAGKDVLGAAQTGSGKTLSFLIPAIEMLHRLKFKPRNGTGAIIISPTRELALQIFGVAKELMAHHHQTFGIIMGGANRRAEADKLQKGVNLIVATPGRLLDHLQNTKGFVFSNLKALCIDEADRILEIGFEDEMRQIVKILPNDNRQSMLFSATQTTKVQDLARISLRPGPLYINVHADLAASTVSRLEQGYVVCESDRRFLLLFTFLKKNAGKKIIVFMSSCNSVKYHSDLLNFIDVPVLDLHGKQKQQKRTNTFFEYCNAPCGTLLCTDVAARGLDIPSVDWIIQFDPPDDPRDYIHRVGRTARAGNSGKSLLFLLPTELGFLRFLKVAKVPLNEYTFPSDKVANVQGQLEKLISKNYYLHQSARDGYRSYLQAYGSYSLKRIFDIHKLDLAKVAKAYGFSVPPKVNITIGTGLKTSASSSSGSGGKRKEVDVDGEGEDADGEINPKRQQSDRRAYYRKNHQNGGSKDHFRKSGANATGNKGGKQWSR.

The span at 31–47 (ATKAKASSASSSSTPAA) shows a compositional bias: low complexity. The interval 31 to 53 (ATKAKASSASSSSTPAAERQPFS) is disordered. The Q motif motif lies at 50 to 78 (QPFSILDLSEPTRKAIDAMGFKTMTEVQA). The Helicase ATP-binding domain maps to 81–257 (IPPLMAGKDV…RISLRPGPLY (177 aa)). 94–101 (AQTGSGKT) is an ATP binding site. Residues 204-207 (DEAD) carry the DEAD box motif. The region spanning 271–440 (RLEQGYVVCE…NVQGQLEKLI (170 aa)) is the Helicase C-terminal domain. Positions 283–299 (RRFLLLFTFLKKNAGKK) match the Bipartite nuclear localization signal motif. Residues 500 to 574 (LKTSASSSSG…GNKGGKQWSR (75 aa)) form a disordered region. Positions 519–528 (VDGEGEDADG) are enriched in acidic residues. Residues 530-541 (INPKRQQSDRRA) are compositionally biased toward basic and acidic residues.

The protein belongs to the DEAD box helicase family. DDX18/HAS1 subfamily. In terms of assembly, associates in the nucleolus with the 60S and pre-60S ribosomal subunits.

It localises to the nucleus. The protein localises to the nucleolus. The enzyme catalyses ATP + H2O = ADP + phosphate + H(+). Its function is as follows. ATP-dependent RNA helicase involved in 40S ribosomal subunit biogenesis. Required for the processing and cleavage of 35S pre-rRNA at sites A0, A1, and A2, leading to mature 18S rRNA. In Mycosarcoma maydis (Corn smut fungus), this protein is ATP-dependent RNA helicase HAS1 (HAS1).